Reading from the N-terminus, the 542-residue chain is CTP synthase (542 aa).

Residues 1–265 (MARYVFITGG…DSEVLAAFGI (265 aa)) are amidoligase domain. Ser13 contributes to the CTP binding site. Ser13 contacts UTP. ATP is bound at residue 14-19 (SLGKGI). Tyr54 contributes to the L-glutamine binding site. Residue Asp71 participates in ATP binding. Residues Asp71 and Glu139 each coordinate Mg(2+). CTP contacts are provided by residues 146-148 (DIE), 186-191 (KTKPTQ), and Lys222. UTP is bound by residues 186-191 (KTKPTQ) and Lys222. The Glutamine amidotransferase type-1 domain maps to 291–541 (TIAIVGKYTG…IAAAVEQSRL (251 aa)). Gly353 is a binding site for L-glutamine. Residue Cys380 is the Nucleophile; for glutamine hydrolysis of the active site. L-glutamine-binding positions include 381–384 (FGMQ), Glu404, and Arg469. Active-site residues include His514 and Glu516.

Belongs to the CTP synthase family. Homotetramer.

It catalyses the reaction UTP + L-glutamine + ATP + H2O = CTP + L-glutamate + ADP + phosphate + 2 H(+). The catalysed reaction is L-glutamine + H2O = L-glutamate + NH4(+). The enzyme catalyses UTP + NH4(+) + ATP = CTP + ADP + phosphate + 2 H(+). The protein operates within pyrimidine metabolism; CTP biosynthesis via de novo pathway; CTP from UDP: step 2/2. Allosterically activated by GTP, when glutamine is the substrate; GTP has no effect on the reaction when ammonia is the substrate. The allosteric effector GTP functions by stabilizing the protein conformation that binds the tetrahedral intermediate(s) formed during glutamine hydrolysis. Inhibited by the product CTP, via allosteric rather than competitive inhibition. In terms of biological role, catalyzes the ATP-dependent amination of UTP to CTP with either L-glutamine or ammonia as the source of nitrogen. Regulates intracellular CTP levels through interactions with the four ribonucleotide triphosphates. The polypeptide is CTP synthase (Chelativorans sp. (strain BNC1)).